The chain runs to 168 residues: MAAKKAGKAGATKDRNNQVVASNRRARHNYAILDTYEAGIALMGTEVKSLRDGQASLADAFATVDDGEIWLRNLHIPEYQHGSWTNHAPRRNRKLLLHRREIDNLIGKIRDGNLTLVPLSLYFTGGKVKVELALARGKQAHDKRQDLARRDAEREVVRELGRRAKGMS.

This sequence belongs to the SmpB family.

The protein resides in the cytoplasm. In terms of biological role, required for rescue of stalled ribosomes mediated by trans-translation. Binds to transfer-messenger RNA (tmRNA), required for stable association of tmRNA with ribosomes. tmRNA and SmpB together mimic tRNA shape, replacing the anticodon stem-loop with SmpB. tmRNA is encoded by the ssrA gene; the 2 termini fold to resemble tRNA(Ala) and it encodes a 'tag peptide', a short internal open reading frame. During trans-translation Ala-aminoacylated tmRNA acts like a tRNA, entering the A-site of stalled ribosomes, displacing the stalled mRNA. The ribosome then switches to translate the ORF on the tmRNA; the nascent peptide is terminated with the 'tag peptide' encoded by the tmRNA and targeted for degradation. The ribosome is freed to recommence translation, which seems to be the essential function of trans-translation. This chain is SsrA-binding protein, found in Mycobacterium sp. (strain JLS).